A 369-amino-acid chain; its full sequence is Delta(14)-sterol reductase (369 aa).

Helical transmembrane passes span 15-34 (QSVY…GEIL), 54-76 (CNGL…LGIV), 86-105 (LELL…ALYV), 146-168 (FFFV…AKSV), 178-195 (ILYQ…FVHE), 208-230 (RLGF…IQGW), and 240-262 (TVPA…RGAN). Residues lysine 265, lysine 269, leucine 289, tryptophan 294, and 301 to 302 (NY) each bind NADP(+). Residues 275–297 (PIWGKPPVVVGGKLLVSGYWGIA) form a helical membrane-spanning segment. Residues 317–336 (GISSPVPYFYPIYLLILLIW) traverse the membrane as a helical segment. NADP(+) is bound by residues aspartate 341, 345–349 (CAEKY), and tyrosine 356.

It belongs to the ERG4/ERG24 family.

The protein localises to the membrane. The enzyme catalyses 4,4-dimethyl-5alpha-cholesta-8,24-dien-3beta-ol + NADP(+) = 4,4-dimethyl-5alpha-cholesta-8,14,24-trien-3beta-ol + NADPH + H(+). The protein operates within steroid biosynthesis; zymosterol biosynthesis; zymosterol from lanosterol: step 2/6. Its function is as follows. Reduces the C14=C15 double bond of 4,4-dimethyl-cholesta-8,14,24-trienol to produce 4,4-dimethyl-cholesta-8,24-dienol. Required for cell division and expansion and is involved in proper organization of the embryo. The sequence is that of Delta(14)-sterol reductase (FK) from Arabidopsis thaliana (Mouse-ear cress).